Here is a 330-residue protein sequence, read N- to C-terminus: MKKIAIDAMGGDYAPKAIVEGVNQAISDFSDIEVQLYGDQKKIEKYLTVTERVSIIHTEEKINSDDEPAKAVRRKKQSSMVLGAKAVKDGVAQAFISAGNTGALLAAGLFVVGRIKGVDRPGLMSTMPTLDGVGFDMLDLGANAENTASHLHQYAILGSFYAKNVRGIEVPRVGLLNNGTEETKGDSLHKEAYELLAAEPSINFIGNIEARDLMSSVADVVVTDGFTGNAVLKTMEGTAMSIMGSLKSSIKSGGVKAKLGALLLKDSLYQLKDSMDYSSAGGAVLFGLKAPIVKCHGSSDSKAVYSTLKQVRTMLETQVVDQLVDAFTDE.

This sequence belongs to the PlsX family. In terms of assembly, homodimer. Probably interacts with PlsY.

It is found in the cytoplasm. It catalyses the reaction a fatty acyl-[ACP] + phosphate = an acyl phosphate + holo-[ACP]. Its pathway is lipid metabolism; phospholipid metabolism. In terms of biological role, catalyzes the reversible formation of acyl-phosphate (acyl-PO(4)) from acyl-[acyl-carrier-protein] (acyl-ACP). This enzyme utilizes acyl-ACP as fatty acyl donor, but not acyl-CoA. This chain is Phosphate acyltransferase, found in Streptococcus agalactiae serotype III (strain NEM316).